We begin with the raw amino-acid sequence, 140 residues long: Large-conductance mechanosensitive channel (140 aa).

A run of 2 helical transmembrane segments spans residues 9-29 (AFAL…GAAF) and 86-106 (GSFL…FLMV).

The protein belongs to the MscL family. Homopentamer.

Its subcellular location is the cell inner membrane. Its function is as follows. Channel that opens in response to stretch forces in the membrane lipid bilayer. May participate in the regulation of osmotic pressure changes within the cell. In Anaeromyxobacter dehalogenans (strain 2CP-1 / ATCC BAA-258), this protein is Large-conductance mechanosensitive channel.